We begin with the raw amino-acid sequence, 1091 residues long: Sodium/potassium exporting P-type ATPase 2 (1091 aa).

The Cytoplasmic portion of the chain corresponds to 1-63 (MSEGTVKENN…LGDDTKIDYK (63 aa)). A helical membrane pass occupies residues 64 to 84 (AMVLHQVCNAMIMVLVISMAI). Topologically, residues 85 to 90 (SFAVRD) are extracellular. A helical transmembrane segment spans residues 91 to 111 (WITGGVISFVIAVNVLIGLVQ). The Cytoplasmic portion of the chain corresponds to 112–282 (EYKATKTMNS…TNVGTPLHRK (171 aa)). The helical transmembrane segment at 283–303 (LSKLAVLLFWIAVLFAIIVMA) threads the bilayer. The Extracellular portion of the chain corresponds to 304–312 (SQKFDVDKR). The chain crosses the membrane as a helical span at residues 313–333 (VAIYAICVALSMIPSSLVVVL). The Cytoplasmic segment spans residues 334-815 (TITMSVGAAV…RRMTDNIQKF (482 aa)). Asp-369 serves as the catalytic 4-aspartylphosphate intermediate. Mg(2+) contacts are provided by Asp-369 and Thr-371. ATP contacts are provided by Thr-371 and Glu-483. A disordered region spans residues 499–525 (ALTGEKSTNQSNENDQSSLSQHNEKPG). Polar residues predominate over residues 503 to 519 (EKSTNQSNENDQSSLSQ). 7 residues coordinate ATP: Lys-561, Arg-606, Thr-673, Gly-674, Asp-675, Arg-732, and Lys-738. Asp-757 contributes to the Mg(2+) binding site. Asn-760 provides a ligand contact to ATP. A helical membrane pass occupies residues 816-836 (VLQLLAENVAQALYLIIGLVF). The Extracellular segment spans residues 837 to 848 (RDENGKSVFPLS). The chain crosses the membrane as a helical span at residues 849–869 (PVEVLWIIVVTSCFPAMGLGL). The Cytoplasmic segment spans residues 870 to 885 (EKAAPDLMDRPPHDSE). A helical membrane pass occupies residues 886–906 (VGIFTWEVIIDTFAYGIIMTG). Over 907-943 (SCMASFTGSLYGINSGRLGHDCDGTYNSSCRDVYRSR) the chain is Extracellular. Residues 944–964 (SAAFATMTWCALILAWEVVDM) traverse the membrane as a helical segment. Residues 965–991 (RRSFFRMHPDTDSPVKEFFRSIWGNQF) are Cytoplasmic-facing. Residues 992–1012 (LFWSIIFGFVSAFPVVYIPVI) traverse the membrane as a helical segment. The Extracellular segment spans residues 1013 to 1021 (NDKVFLHKP). Residues 1022 to 1042 (IGAEWGLAIAFTIAFWIGAEL) traverse the membrane as a helical segment. The Cytoplasmic portion of the chain corresponds to 1043-1091 (YKCGKRRYFKTQRAHNPENDLESNNKRDPFEAYSTSTTIHTEVNIGIKQ).

The protein belongs to the cation transport ATPase (P-type) (TC 3.A.3) family. Type IID subfamily. The cofactor is Mg(2+). In terms of processing, the active site is phosphorylated in presence of sodium or potassium and in conditions of higher pH. Not phosphorylated in presence of calcium ions.

The protein resides in the cell membrane. It carries out the reaction Na(+)(in) + ATP + H2O = Na(+)(out) + ADP + phosphate + H(+). The catalysed reaction is K(+)(in) + ATP + H2O = K(+)(out) + ADP + phosphate + H(+). Functionally, catalyzes the hydrolysis of ATP coupled with the export of sodium and potassium from the cell. May export potassium less efficiently. May transport other cations such as lithium. Sodium/potassium efflux ATPases are involved in salt tolerance and maintaining the membrane potential across the plasma membrane in high salinity (Na+) or alkaline (K+) environments. This chain is Sodium/potassium exporting P-type ATPase 2, found in Saccharomyces cerevisiae (strain ATCC 204508 / S288c) (Baker's yeast).